Reading from the N-terminus, the 267-residue chain is Tryptophan synthase alpha chain (267 aa).

Residues E49 and D60 each act as proton acceptor in the active site.

Belongs to the TrpA family. Tetramer of two alpha and two beta chains.

It carries out the reaction (1S,2R)-1-C-(indol-3-yl)glycerol 3-phosphate + L-serine = D-glyceraldehyde 3-phosphate + L-tryptophan + H2O. The protein operates within amino-acid biosynthesis; L-tryptophan biosynthesis; L-tryptophan from chorismate: step 5/5. Functionally, the alpha subunit is responsible for the aldol cleavage of indoleglycerol phosphate to indole and glyceraldehyde 3-phosphate. The protein is Tryptophan synthase alpha chain of Carboxydothermus hydrogenoformans (strain ATCC BAA-161 / DSM 6008 / Z-2901).